The following is a 107-amino-acid chain: ATP-dependent Clp protease adapter protein ClpS (107 aa).

Residues M1 to K20 are disordered.

This sequence belongs to the ClpS family. In terms of assembly, binds to the N-terminal domain of the chaperone ClpA.

Functionally, involved in the modulation of the specificity of the ClpAP-mediated ATP-dependent protein degradation. This Myxococcus xanthus (strain DK1622) protein is ATP-dependent Clp protease adapter protein ClpS.